A 144-amino-acid chain; its full sequence is Superoxide dismutase [Mn] (144 aa).

Residues 1-22 (GYVNGLESAEETLAENRESGDF) are disordered. Mn(2+) is bound by residues His-42, Asp-124, and His-128.

It belongs to the iron/manganese superoxide dismutase family. Requires Mn(2+) as cofactor.

It catalyses the reaction 2 superoxide + 2 H(+) = H2O2 + O2. Its function is as follows. Destroys superoxide anion radicals which are normally produced within the cells and which are toxic to biological systems. The sequence is that of Superoxide dismutase [Mn] (sod) from Haloarcula hispanica.